The following is a 159-amino-acid chain: 2-C-methyl-D-erythritol 2,4-cyclodiphosphate synthase (159 aa).

A divalent metal cation contacts are provided by aspartate 10 and histidine 12. 4-CDP-2-C-methyl-D-erythritol 2-phosphate is bound by residues 10-12 (DVH) and 36-37 (HS). Histidine 44 contacts a divalent metal cation. 4-CDP-2-C-methyl-D-erythritol 2-phosphate-binding positions include 58–60 (DIG), 134–137 (TTTE), phenylalanine 141, and arginine 144.

The protein belongs to the IspF family. In terms of assembly, homotrimer. A divalent metal cation serves as cofactor.

The catalysed reaction is 4-CDP-2-C-methyl-D-erythritol 2-phosphate = 2-C-methyl-D-erythritol 2,4-cyclic diphosphate + CMP. The protein operates within isoprenoid biosynthesis; isopentenyl diphosphate biosynthesis via DXP pathway; isopentenyl diphosphate from 1-deoxy-D-xylulose 5-phosphate: step 4/6. In terms of biological role, involved in the biosynthesis of isopentenyl diphosphate (IPP) and dimethylallyl diphosphate (DMAPP), two major building blocks of isoprenoid compounds. Catalyzes the conversion of 4-diphosphocytidyl-2-C-methyl-D-erythritol 2-phosphate (CDP-ME2P) to 2-C-methyl-D-erythritol 2,4-cyclodiphosphate (ME-CPP) with a corresponding release of cytidine 5-monophosphate (CMP). The protein is 2-C-methyl-D-erythritol 2,4-cyclodiphosphate synthase of Bacteroides thetaiotaomicron (strain ATCC 29148 / DSM 2079 / JCM 5827 / CCUG 10774 / NCTC 10582 / VPI-5482 / E50).